The primary structure comprises 227 residues: PKHD-type hydroxylase Neut_0373 (227 aa).

The Fe2OG dioxygenase domain maps to 78–179 (KIMPPFFNRY…RIACFMFIQS (102 aa)). His97, Asp99, and His160 together coordinate Fe cation. Arg170 provides a ligand contact to 2-oxoglutarate.

Fe(2+) is required as a cofactor. L-ascorbate serves as cofactor.

In Nitrosomonas eutropha (strain DSM 101675 / C91 / Nm57), this protein is PKHD-type hydroxylase Neut_0373.